A 930-amino-acid chain; its full sequence is Isoleucine--tRNA ligase (930 aa).

A disordered region spans residues 1 to 21 (MRVKDTLNLGKTKFPMRGRLP). The 'HIGH' region motif lies at 57 to 67 (PYANGPIHIGH). Glu-555 lines the L-isoleucyl-5'-AMP pocket. A 'KMSKS' region motif is present at residues 596 to 600 (KMSKS). Lys-599 serves as a coordination point for ATP. Residues Cys-889, Cys-892, Cys-909, and Cys-912 each contribute to the Zn(2+) site.

Belongs to the class-I aminoacyl-tRNA synthetase family. IleS type 1 subfamily. In terms of assembly, monomer. The cofactor is Zn(2+).

Its subcellular location is the cytoplasm. It carries out the reaction tRNA(Ile) + L-isoleucine + ATP = L-isoleucyl-tRNA(Ile) + AMP + diphosphate. Catalyzes the attachment of isoleucine to tRNA(Ile). As IleRS can inadvertently accommodate and process structurally similar amino acids such as valine, to avoid such errors it has two additional distinct tRNA(Ile)-dependent editing activities. One activity is designated as 'pretransfer' editing and involves the hydrolysis of activated Val-AMP. The other activity is designated 'posttransfer' editing and involves deacylation of mischarged Val-tRNA(Ile). In Limosilactobacillus fermentum (strain NBRC 3956 / LMG 18251) (Lactobacillus fermentum), this protein is Isoleucine--tRNA ligase.